Consider the following 292-residue polypeptide: Probable endonuclease 4 (292 aa).

Residues histidine 69, histidine 109, glutamate 145, aspartate 179, histidine 182, histidine 216, aspartate 229, histidine 231, and glutamate 261 each coordinate Zn(2+).

Belongs to the AP endonuclease 2 family. The cofactor is Zn(2+).

The enzyme catalyses Endonucleolytic cleavage to 5'-phosphooligonucleotide end-products.. In terms of biological role, endonuclease IV plays a role in DNA repair. It cleaves phosphodiester bonds at apurinic or apyrimidinic (AP) sites, generating a 3'-hydroxyl group and a 5'-terminal sugar phosphate. The chain is Probable endonuclease 4 from Desulfotalea psychrophila (strain LSv54 / DSM 12343).